Consider the following 491-residue polypeptide: Glutamate--tRNA ligase (491 aa).

Residues 13–23 (PSPTGFLHIGN) carry the 'HIGH' region motif. The Zn(2+) site is built by C110, C112, C137, and H139. Positions 254–258 (KLSKR) match the 'KMSKS' region motif. K257 lines the ATP pocket.

Belongs to the class-I aminoacyl-tRNA synthetase family. Glutamate--tRNA ligase type 1 subfamily. As to quaternary structure, monomer. Requires Zn(2+) as cofactor.

Its subcellular location is the cytoplasm. It carries out the reaction tRNA(Glu) + L-glutamate + ATP = L-glutamyl-tRNA(Glu) + AMP + diphosphate. Catalyzes the attachment of glutamate to tRNA(Glu) in a two-step reaction: glutamate is first activated by ATP to form Glu-AMP and then transferred to the acceptor end of tRNA(Glu). The chain is Glutamate--tRNA ligase from Listeria monocytogenes serotype 4b (strain F2365).